Reading from the N-terminus, the 71-residue chain is uncharacterized protein (71 aa).

This is an uncharacterized protein from Thermoproteus tenax virus 1 (strain KRA1) (TTV1).